The following is a 252-amino-acid chain: MKTVTVKDLVIGAGAPKIIVSLMAKDIARVKSEALAYREADFDILEWRVDHFADLSNVESVMAAAKILRETMPEKPLLFTFRSAKEGGEQAISTEAYIALNRAAIDSGLVDMIDLELFTGDDQVKETVAYAHAHDVKVVMSNHDFHKTPEAEEIIARLRKMQSFDADIPKIALMPQSTSDVLTLLTATLEMQEQYADRPIITMSMAKTGVISRLAGEVFGSAATFGAVKKASAPGQISVNDLRTVLTILHQA.

3-dehydroquinate is bound by residues Ser21, 46-48, and Arg82; that span reads EWR. The active-site Proton donor/acceptor is the His143. Lys170 serves as the catalytic Schiff-base intermediate with substrate. 3-dehydroquinate-binding residues include Arg213, Ser232, and Gln236.

The protein belongs to the type-I 3-dehydroquinase family. As to quaternary structure, homodimer.

The catalysed reaction is 3-dehydroquinate = 3-dehydroshikimate + H2O. The protein operates within metabolic intermediate biosynthesis; chorismate biosynthesis; chorismate from D-erythrose 4-phosphate and phosphoenolpyruvate: step 3/7. Functionally, involved in the third step of the chorismate pathway, which leads to the biosynthesis of aromatic amino acids. Catalyzes the cis-dehydration of 3-dehydroquinate (DHQ) and introduces the first double bond of the aromatic ring to yield 3-dehydroshikimate. The polypeptide is 3-dehydroquinate dehydratase (Shigella sonnei (strain Ss046)).